The chain runs to 581 residues: 2-succinyl-5-enolpyruvyl-6-hydroxy-3-cyclohexene-1-carboxylate synthase (581 aa).

The protein belongs to the TPP enzyme family. MenD subfamily. As to quaternary structure, homodimer. The cofactor is Mg(2+). Mn(2+) serves as cofactor. It depends on thiamine diphosphate as a cofactor.

The enzyme catalyses isochorismate + 2-oxoglutarate + H(+) = 5-enolpyruvoyl-6-hydroxy-2-succinyl-cyclohex-3-ene-1-carboxylate + CO2. It functions in the pathway quinol/quinone metabolism; 1,4-dihydroxy-2-naphthoate biosynthesis; 1,4-dihydroxy-2-naphthoate from chorismate: step 2/7. It participates in quinol/quinone metabolism; menaquinone biosynthesis. Catalyzes the thiamine diphosphate-dependent decarboxylation of 2-oxoglutarate and the subsequent addition of the resulting succinic semialdehyde-thiamine pyrophosphate anion to isochorismate to yield 2-succinyl-5-enolpyruvyl-6-hydroxy-3-cyclohexene-1-carboxylate (SEPHCHC). The protein is 2-succinyl-5-enolpyruvyl-6-hydroxy-3-cyclohexene-1-carboxylate synthase of Psychromonas ingrahamii (strain DSM 17664 / CCUG 51855 / 37).